A 427-amino-acid polypeptide reads, in one-letter code: Enolase (427 aa).

Q163 serves as a coordination point for (2R)-2-phosphoglycerate. Residue E205 is the Proton donor of the active site. Residues D242, E285, and D312 each contribute to the Mg(2+) site. 4 residues coordinate (2R)-2-phosphoglycerate: K337, R366, S367, and K388. The active-site Proton acceptor is K337.

Belongs to the enolase family. Requires Mg(2+) as cofactor.

It is found in the cytoplasm. The protein resides in the secreted. Its subcellular location is the cell surface. It catalyses the reaction (2R)-2-phosphoglycerate = phosphoenolpyruvate + H2O. It functions in the pathway carbohydrate degradation; glycolysis; pyruvate from D-glyceraldehyde 3-phosphate: step 4/5. In terms of biological role, catalyzes the reversible conversion of 2-phosphoglycerate (2-PG) into phosphoenolpyruvate (PEP). It is essential for the degradation of carbohydrates via glycolysis. The chain is Enolase from Bradyrhizobium sp. (strain BTAi1 / ATCC BAA-1182).